The sequence spans 203 residues: Phosphatidylethanolamine N-methyltransferase (203 aa).

The enzyme catalyses a 1,2-diacyl-sn-glycero-3-phosphoethanolamine + S-adenosyl-L-methionine = a 1,2-diacyl-sn-glycero-3-phospho-N-methylethanolamine + S-adenosyl-L-homocysteine + H(+). It functions in the pathway phospholipid metabolism; phosphatidylcholine biosynthesis. This enzyme catalyzes three distinct methylation reactions for converting phosphatidylethanolamine to phosphatidylcholine. This chain is Phosphatidylethanolamine N-methyltransferase (pmtA), found in Cereibacter sphaeroides (Rhodobacter sphaeroides).